A 359-amino-acid polypeptide reads, in one-letter code: 4-galactosyl-N-acetylglucosaminide 3-alpha-L-fucosyltransferase 9 (359 aa).

The Cytoplasmic portion of the chain corresponds to 1 to 11 (MTSTSKGILRP). Residues 12-32 (FLIVCVILACFMACLLIYIKP) traverse the membrane as a helical; Signal-anchor for type II membrane protein segment. Residues 33-359 (TNSWVFSPME…VGNLEKWFWN (327 aa)) lie on the Lumenal side of the membrane. Asn-62 carries N-linked (GlcNAc...) asparagine glycosylation. Residues 63 to 168 (ETTILVWVWP…RRDSDIQVPY (106 aa)) form an acceptor-binding region. Gln-75 is a binding site for a beta-D-galactosyl-(1-&gt;4)-N-acetyl-beta-D-glucosaminyl derivative. Intrachain disulfides connect Cys-82-Cys-335, Cys-91-Cys-338, and Cys-190-Cys-238. Asn-101 carries an N-linked (GlcNAc...) asparagine glycan. Glu-137 contacts a beta-D-galactosyl-(1-&gt;4)-N-acetyl-beta-D-glucosaminyl derivative. The Nucleophile role is filled by Glu-137. Glu-137 contacts GDP-beta-L-fucose. An N-linked (GlcNAc...) asparagine glycan is attached at Asn-153. Tyr-168, Val-192, Ser-194, Asn-195, Arg-202, Val-226, Tyr-241, Asn-246, Tyr-252, Glu-255, and Lys-256 together coordinate GDP-beta-L-fucose. The segment at 169-326 (GFLTVSTNPF…NWRKDFTVNL (158 aa)) is donor-binding. The segment at 327-359 (PRFWESHACLACDHVKRHQEYKSVGNLEKWFWN) is acceptor-binding.

It belongs to the glycosyltransferase 10 family. Homodimer. Post-translationally, N-glycosylated with complex-type N-glycans.

Its subcellular location is the golgi apparatus. The protein resides in the trans-Golgi network membrane. It is found in the golgi apparatus membrane. The enzyme catalyses a beta-D-galactosyl-(1-&gt;4)-N-acetyl-beta-D-glucosaminyl derivative + GDP-beta-L-fucose = a beta-D-galactosyl-(1-&gt;4)-[alpha-L-fucosyl-(1-&gt;3)]-N-acetyl-beta-D-glucosaminyl derivative + GDP + H(+). It catalyses the reaction an alpha-Neu5Ac-(2-&gt;3)-beta-D-Gal-(1-&gt;4)-beta-D-GlcNAc-(1-&gt;3)-beta-D-Gal-(1-&gt;4)-beta-D-GlcNAc derivative + GDP-beta-L-fucose = an alpha-Neu5Ac-(2-&gt;3)-beta-D-Gal-(1-&gt;4)-beta-D-GlcNAc-(1-&gt;3)-beta-D-Gal-(1-&gt;4)-[alpha-L-Fuc-(1-&gt;3)]-beta-D-GlcNAc derivative + GDP + H(+). The catalysed reaction is alpha-N-glycoloylneuraminosyl-(2-&gt;3)-beta-D-galactosyl-(1-&gt;4)-N-acetyl-beta-D-glucosaminyl-(1-&gt;3)-beta-D-galactosyl-(1-&gt;4)-N-acetyl-beta-D-glucosaminyl-(1-&gt;3)-beta-D-galactosyl-(1-&gt;4)-beta-D-glucosyl-(1&lt;-&gt;1')-ceramide + GDP-beta-L-fucose = alpha-N-glycoloylneuraminosyl-(2-&gt;3)-beta-D-galactosyl-(1-&gt;4)-N-acetyl-beta-D-glucosaminyl-(1-&gt;3)-beta-D-galactosyl-(1-&gt;4)-[alpha-L-fucosyl-(1-&gt;3)]-N-acetyl-beta-D-glucosaminyl-(1-&gt;3)-beta-D-galactosyl-(1-&gt;4)-beta-D-glucosyl-(1&lt;-&gt;1')-ceramide + GDP + H(+). It carries out the reaction alpha-D-galactosyl-(1-&gt;3)-beta-D-galactosyl-(1-&gt;4)-N-acetyl-beta-D-glucosaminyl-(1-&gt;3)-beta-D-galactosyl-(1-&gt;4)-beta-D-glucosyl-(1&lt;-&gt;1')-ceramide + GDP-beta-L-fucose = a neolactoside IV(3)-alpha-Gal,III(3)-alpha-Fuc-nLc4Cer + GDP + H(+). The enzyme catalyses a neolactoside nLc4Cer + GDP-beta-L-fucose = a neolactoside III(3)-alpha-Fuc-nLc4Cer + GDP + H(+). It catalyses the reaction an N-acetyl-alpha-neuraminyl-(2-&gt;3)-beta-D-galactosyl-(1-&gt;4)-N-acetyl-beta-D-glucosaminyl derivative + GDP-beta-L-fucose = an alpha-Neu5Ac-(2-&gt;3)-beta-D-Gal-(1-&gt;4)-[alpha-L-Fuc-(1-&gt;3)]-beta-D-GlcNAc derivative + GDP + H(+). The catalysed reaction is beta-D-Gal-(1-&gt;4)-beta-D-GlcNAc-(1-&gt;3)-beta-D-Gal-(1-&gt;4)-D-Glc + GDP-beta-L-fucose = beta-D-Gal-(1-&gt;4)-[alpha-L-Fuc-(1-&gt;3)]-beta-D-GlcNAc-(1-&gt;3)-beta-D-Gal-(1-&gt;4)-D-Glc + GDP + H(+). It carries out the reaction an alpha-L-Fuc-(1-&gt;2)-beta-D-Gal-(1-&gt;4)-beta-D-GlcNAc derivative + GDP-beta-L-fucose = an alpha-L-Fuc-(1-&gt;2)-beta-D-Gal-(1-&gt;4)-[alpha-L-Fuc-(1-&gt;3)]-beta-D-GlcNAc derivative + GDP + H(+). The protein operates within protein modification; protein glycosylation. It participates in glycolipid biosynthesis. Its activity is regulated as follows. Activated by Mn2+. Its function is as follows. Catalyzes alpha(1-&gt;3) linkage of fucosyl moiety transferred from GDP-beta-L-fucose to N-acetyl glucosamine (GlcNAc) within type 2 lactosamine (LacNAc, beta-D-Gal-(1-&gt;4)-beta-D-GlcNAc-) glycan attached to glycolipids and N- or O-linked glycoproteins. Fucosylates distal type 2 LacNAc and its fucosylated (H-type 2 LacNAc) and sialylated (sialyl-type 2 LacNAc) derivatives to form Lewis x (Lex) (CD15) and Lewis y (Ley) antigenic epitopes involved in cell adhesion and differentiation. Generates Lex epitopes in the brain, presumably playing a role in the maintenance of neuronal stemness and neurite outgrowth in progenitor neural cells. Fucosylates the internal type 2 LacNAc unit of the polylactosamine chain to form VIM-2 antigen that serves as recognition epitope for SELE. Can also modify milk oligosaccharides in particular type 2 tetrasaccharide LNnT. The sequence is that of 4-galactosyl-N-acetylglucosaminide 3-alpha-L-fucosyltransferase 9 from Cricetulus griseus (Chinese hamster).